The primary structure comprises 264 residues: H-2 class II histocompatibility antigen, I-E beta chain (264 aa).

A signal peptide spans 1-31 (MVWLPRVPCVAAVILLLTVLSPPVALVRNSR). Residues 32–121 (PRFLEYSTSE…IFDNFLVPRR (90 aa)) form a beta-1 region. The Extracellular portion of the chain corresponds to 32 to 225 (PRFLEYSTSE…KAQSTSAQNK (194 aa)). 2 disulfides stabilise this stretch: C42–C106 and C144–C200. N46 carries an N-linked (GlcNAc...) asparagine glycan. The segment at 122–215 (VEPTVTVYPT…SLTDPVTVEW (94 aa)) is beta-2. The region spanning 124-214 (PTVTVYPTKT…PSLTDPVTVE (91 aa)) is the Ig-like C1-type domain. Residues 216-225 (KAQSTSAQNK) form a connecting peptide region. A helical membrane pass occupies residues 226 to 248 (MLSGVGGFVLGLLFLGAGLFIYF). At 249–264 (RNQKGQSGLQPTGLLS) the chain is on the cytoplasmic side.

The protein belongs to the MHC class II family. In terms of processing, ubiquitinated in immature dendritic cells leading to down-regulation of MHC class II.

Its subcellular location is the membrane. The sequence is that of H-2 class II histocompatibility antigen, I-E beta chain (H2-Eb1) from Mus musculus (Mouse).